The primary structure comprises 106 residues: Nucleoid-associated protein DIP0260 (106 aa).

The protein belongs to the YbaB/EbfC family. As to quaternary structure, homodimer.

Its subcellular location is the cytoplasm. The protein resides in the nucleoid. Binds to DNA and alters its conformation. May be involved in regulation of gene expression, nucleoid organization and DNA protection. The polypeptide is Nucleoid-associated protein DIP0260 (Corynebacterium diphtheriae (strain ATCC 700971 / NCTC 13129 / Biotype gravis)).